Consider the following 361-residue polypeptide: Holliday junction branch migration complex subunit RuvB (361 aa).

The tract at residues 1–183 (MAEPSLVAAG…FGFTGHLEFY (183 aa)) is large ATPase domain (RuvB-L). ATP is bound by residues Leu-22, Arg-23, Gly-64, Lys-67, Thr-68, Thr-69, 130 to 132 (EDF), Arg-173, Tyr-183, and Arg-220. Thr-68 contacts Mg(2+). A small ATPAse domain (RuvB-S) region spans residues 184 to 254 (SVPELELVLR…SASAALDMYE (71 aa)). Residues 257-361 (KKGLDRLDRS…VTGEWAPESQ (105 aa)) form a head domain (RuvB-H) region. Positions 312 and 317 each coordinate DNA.

The protein belongs to the RuvB family. In terms of assembly, homohexamer. Forms an RuvA(8)-RuvB(12)-Holliday junction (HJ) complex. HJ DNA is sandwiched between 2 RuvA tetramers; dsDNA enters through RuvA and exits via RuvB. An RuvB hexamer assembles on each DNA strand where it exits the tetramer. Each RuvB hexamer is contacted by two RuvA subunits (via domain III) on 2 adjacent RuvB subunits; this complex drives branch migration. In the full resolvosome a probable DNA-RuvA(4)-RuvB(12)-RuvC(2) complex forms which resolves the HJ.

It is found in the cytoplasm. It catalyses the reaction ATP + H2O = ADP + phosphate + H(+). The RuvA-RuvB-RuvC complex processes Holliday junction (HJ) DNA during genetic recombination and DNA repair, while the RuvA-RuvB complex plays an important role in the rescue of blocked DNA replication forks via replication fork reversal (RFR). RuvA specifically binds to HJ cruciform DNA, conferring on it an open structure. The RuvB hexamer acts as an ATP-dependent pump, pulling dsDNA into and through the RuvAB complex. RuvB forms 2 homohexamers on either side of HJ DNA bound by 1 or 2 RuvA tetramers; 4 subunits per hexamer contact DNA at a time. Coordinated motions by a converter formed by DNA-disengaged RuvB subunits stimulates ATP hydrolysis and nucleotide exchange. Immobilization of the converter enables RuvB to convert the ATP-contained energy into a lever motion, pulling 2 nucleotides of DNA out of the RuvA tetramer per ATP hydrolyzed, thus driving DNA branch migration. The RuvB motors rotate together with the DNA substrate, which together with the progressing nucleotide cycle form the mechanistic basis for DNA recombination by continuous HJ branch migration. Branch migration allows RuvC to scan DNA until it finds its consensus sequence, where it cleaves and resolves cruciform DNA. The polypeptide is Holliday junction branch migration complex subunit RuvB (Pseudarthrobacter chlorophenolicus (strain ATCC 700700 / DSM 12829 / CIP 107037 / JCM 12360 / KCTC 9906 / NCIMB 13794 / A6) (Arthrobacter chlorophenolicus)).